A 471-amino-acid polypeptide reads, in one-letter code: Vitellogenic carboxypeptidase (471 aa).

Positions 1-19 are cleaved as a signal peptide; that stretch reads MVKFHLLVLIAFTCYTCSD. Asn-135 carries an N-linked (GlcNAc...) asparagine glycan. Active-site residues include Ser-207, Asp-391, and His-448.

It belongs to the peptidase S10 family. Synthesized in the fat body of vitellogenic females, secreted into the hemolymph and accumulates in yolk bodies of developing oocytes.

Its subcellular location is the secreted. In terms of biological role, may play a role in activating hydrolytic enzymes that are involved in the degradation of yolk proteins in developing embryos or may function as an exopeptidase in the degradation of vitellogenin. The chain is Vitellogenic carboxypeptidase (VCP) from Aedes aegypti (Yellowfever mosquito).